A 456-amino-acid polypeptide reads, in one-letter code: Bifunctional protein GlmU (456 aa).

A pyrophosphorylase region spans residues 1 to 229; it reads MLNNAMSVVI…LSEVEGVNNR (229 aa). Residues 11–14, Lys25, Gln76, 81–82, 103–105, Gly140, Glu154, Asn169, and Asn227 each bind UDP-N-acetyl-alpha-D-glucosamine; these read LAAG, GT, and YGD. A Mg(2+)-binding site is contributed by Asp105. Asn227 is a Mg(2+) binding site. The tract at residues 230-250 is linker; sequence LQLSRLERVYQSEQAEKLLLA. The interval 251–456 is N-acetyltransferase; it reads GVMLRDPARF…EGWRRPVKKK (206 aa). Positions 333 and 351 each coordinate UDP-N-acetyl-alpha-D-glucosamine. His363 (proton acceptor) is an active-site residue. Residues Tyr366 and Asn377 each coordinate UDP-N-acetyl-alpha-D-glucosamine. Residues Ala380, 386 to 387, Ser405, Ala423, and Arg440 each bind acetyl-CoA; that span reads NY.

This sequence in the N-terminal section; belongs to the N-acetylglucosamine-1-phosphate uridyltransferase family. In the C-terminal section; belongs to the transferase hexapeptide repeat family. In terms of assembly, homotrimer. Requires Mg(2+) as cofactor.

The protein resides in the cytoplasm. It catalyses the reaction alpha-D-glucosamine 1-phosphate + acetyl-CoA = N-acetyl-alpha-D-glucosamine 1-phosphate + CoA + H(+). It carries out the reaction N-acetyl-alpha-D-glucosamine 1-phosphate + UTP + H(+) = UDP-N-acetyl-alpha-D-glucosamine + diphosphate. Its pathway is nucleotide-sugar biosynthesis; UDP-N-acetyl-alpha-D-glucosamine biosynthesis; N-acetyl-alpha-D-glucosamine 1-phosphate from alpha-D-glucosamine 6-phosphate (route II): step 2/2. It participates in nucleotide-sugar biosynthesis; UDP-N-acetyl-alpha-D-glucosamine biosynthesis; UDP-N-acetyl-alpha-D-glucosamine from N-acetyl-alpha-D-glucosamine 1-phosphate: step 1/1. It functions in the pathway bacterial outer membrane biogenesis; LPS lipid A biosynthesis. Its function is as follows. Catalyzes the last two sequential reactions in the de novo biosynthetic pathway for UDP-N-acetylglucosamine (UDP-GlcNAc). The C-terminal domain catalyzes the transfer of acetyl group from acetyl coenzyme A to glucosamine-1-phosphate (GlcN-1-P) to produce N-acetylglucosamine-1-phosphate (GlcNAc-1-P), which is converted into UDP-GlcNAc by the transfer of uridine 5-monophosphate (from uridine 5-triphosphate), a reaction catalyzed by the N-terminal domain. This Shigella boydii serotype 4 (strain Sb227) protein is Bifunctional protein GlmU.